We begin with the raw amino-acid sequence, 570 residues long: Capsid vertex component 2 (570 aa).

The tract at residues 1-54 (MALSGHVLIDPARLPRDTGPELMWAPSLRNSLRVSPEALELAEREAERARSERW) is interaction with major capsid protein/MCP. The interval 102–123 (QVRSPSTGGRSAPAPPSPSPAQ) is disordered.

This sequence belongs to the herpesviridae CVC2 protein family. Heterodimerizes with CVC1. Interacts with major capsid protein/MCP and triplex capsid protein 1/TRX1 at the pentamer vertices. Interacts with the large tegument protein/LTP.

It is found in the virion. The protein localises to the host nucleus. Its function is as follows. Capsid vertex-specific component that plays a role during viral DNA encapsidation, assuring correct genome cleavage and presumably stabilizing capsids that contain full-length viral genomes. Participates in the interaction between the capsid and the tegument through interaction with the large tegument protein/LTP. This chain is Capsid vertex component 2, found in Homo sapiens (Human).